The chain runs to 274 residues: Nitrogenase iron protein (274 aa).

8–15 (GKGGIGKS) is an ATP binding site. Cysteine 94 is a binding site for [4Fe-4S] cluster. Residue arginine 97 is modified to ADP-ribosylarginine; by dinitrogenase reductase ADP-ribosyltransferase. Cysteine 131 is a binding site for [4Fe-4S] cluster.

Belongs to the NifH/BchL/ChlL family. As to quaternary structure, homodimer. It depends on [4Fe-4S] cluster as a cofactor. The reversible ADP-ribosylation of Arg-97 inactivates the nitrogenase reductase and regulates nitrogenase activity.

The enzyme catalyses N2 + 8 reduced [2Fe-2S]-[ferredoxin] + 16 ATP + 16 H2O = H2 + 8 oxidized [2Fe-2S]-[ferredoxin] + 2 NH4(+) + 16 ADP + 16 phosphate + 6 H(+). The key enzymatic reactions in nitrogen fixation are catalyzed by the nitrogenase complex, which has 2 components: the iron protein and the molybdenum-iron protein. This Solidesulfovibrio magneticus (strain ATCC 700980 / DSM 13731 / RS-1) (Desulfovibrio magneticus) protein is Nitrogenase iron protein.